A 1221-amino-acid chain; its full sequence is 2-oxoglutarate dehydrogenase E1/E2 component (1221 aa).

The tract at residues 2 to 40 is 2-oxoglutarate dehydrogenase E1, N-terminal part; sequence SSASTFGQNAWLVDEMFQQFQKDPKSVDKEWRELFEAQG. The segment at 22 to 107 is disordered; it reads QKDPKSVDKE…KLPEPGQTPI (86 aa). Basic and acidic residues predominate over residues 23–36; that stretch reads KDPKSVDKEWRELF. Residues 41-52 are compositionally biased toward polar residues; the sequence is GPNTTPATTEAQ. Residues 41–89 form a linker region; it reads GPNTTPATTEAQPSAPKESAKPAPKAAPAAKAAPRVETKPADKTAPKAK. The segment covering 53–73 has biased composition (low complexity); it reads PSAPKESAKPAPKAAPAAKAA. Basic and acidic residues predominate over residues 74–90; the sequence is PRVETKPADKTAPKAKE. The segment at 90-337 is succinyltransferase E2; sequence ESSVPQQPKL…LRTMSRLLTD (248 aa). Histidine 316 serves as the catalytic Proton acceptor; for succinyltransferase activity. The interval 338 to 1221 is 2-oxoglutarate dehydrogenase E1, C-terminal part; the sequence is DSFWDEIFDA…KQLIDEAFEA (884 aa). Thiamine diphosphate is bound at residue arginine 544. Histidine 583 and serine 608 together coordinate 2-oxoglutarate. Serine 608, leucine 610, aspartate 645, alanine 646, alanine 647, and asparagine 678 together coordinate thiamine diphosphate. Aspartate 645 lines the Mg(2+) pocket. The Mg(2+) site is built by asparagine 678 and isoleucine 680. Histidine 1017 is a 2-oxoglutarate binding site. Residues threonine 1035, arginine 1051, lysine 1087, serine 1090, and arginine 1144 each coordinate acetyl-CoA.

This sequence in the N-terminal section; belongs to the alpha-ketoglutarate dehydrogenase family. The protein in the C-terminal section; belongs to the 2-oxoacid dehydrogenase family. As to quaternary structure, homodimer. Part of an unusual ODH/PDH supercomplex, consisting of AceE (E1), AceF (E2), and Lpd (E3) together with OdhA (E1+E2). Interacts with the FHA domain of unphosphorylated OdhI via its C-terminal dehydrogenase domain. Mg(2+) is required as a cofactor. Thiamine diphosphate serves as cofactor.

The catalysed reaction is N(6)-[(R)-lipoyl]-L-lysyl-[protein] + 2-oxoglutarate + H(+) = N(6)-[(R)-S(8)-succinyldihydrolipoyl]-L-lysyl-[protein] + CO2. It carries out the reaction N(6)-[(R)-dihydrolipoyl]-L-lysyl-[protein] + succinyl-CoA = N(6)-[(R)-S(8)-succinyldihydrolipoyl]-L-lysyl-[protein] + CoA. The protein operates within carbohydrate metabolism; tricarboxylic acid cycle; succinyl-CoA from 2-oxoglutarate (dehydrogenase route): step 1/1. Its activity is regulated as follows. Inhibited by unphosphorylated OdhI, but not by phosphorylated OdhI. Catalyzes the E1 and E2 reactions as part of 2-oxoglutarate dehydrogenase (ODH) activity, to convert 2-oxoglutarate to succinyl-CoA and CO(2). OdhA has reductase activity with 2-oxoglutarate but does not react with pyruvate, and also displays transsuccinylase but no transacetylase activity. Since OdhA is not lipoylated, the succinyltransferase activity of its E2 domain is dependent on lipoyl residues of the acetyltransferase AceF. The polypeptide is 2-oxoglutarate dehydrogenase E1/E2 component (Corynebacterium glutamicum (strain ATCC 13032 / DSM 20300 / JCM 1318 / BCRC 11384 / CCUG 27702 / LMG 3730 / NBRC 12168 / NCIMB 10025 / NRRL B-2784 / 534)).